A 3268-amino-acid polypeptide reads, in one-letter code: E3 ubiquitin-protein ligase TOM1 (3268 aa).

At S1890 the chain carries Phosphoserine. Disordered stretches follow at residues 1941-2023 (VFSD…EDDA) and 2038-2083 (GYDV…MGDS). Residues 1942 to 1955 (FSDEDDDMGEEDAD) show a composition bias toward acidic residues. Residues 1967 to 1976 (SSEMQSSTAD) show a composition bias toward polar residues. Composition is skewed to acidic residues over residues 1978-1988 (TDVDYEVDDAD), 2042-2053 (DLSDYDVDESDW), and 2063-2074 (SDEDSESSEDEP). Residue T2096 is modified to Phosphothreonine. A phosphoserine mark is found at S2119, S2376, S2406, and S2418. The span at 2416–2426 (DVSNNDEEVEN) shows a compositional bias: acidic residues. Residues 2416 to 2443 (DVSNNDEEVENGLDHGNSNDRNNADPEK) form a disordered region. Residues 2932–3268 (TNDEIKNSKL…NEGHEGFGLA (337 aa)) form the HECT domain. C3235 serves as the catalytic Glycyl thioester intermediate.

Belongs to the UPL family. TOM1/PTR1 subfamily. As to quaternary structure, interacts with the ADA3/NGG1 subunit of the SAGA complex. Interacts with KRR1.

The protein resides in the nucleus. Its subcellular location is the nucleolus. It carries out the reaction S-ubiquitinyl-[E2 ubiquitin-conjugating enzyme]-L-cysteine + [acceptor protein]-L-lysine = [E2 ubiquitin-conjugating enzyme]-L-cysteine + N(6)-ubiquitinyl-[acceptor protein]-L-lysine.. It functions in the pathway protein modification; protein ubiquitination. Its function is as follows. Probable ubiquitin ligase protein involved in many cellular processes, such as transcription regulation, maintenance of nuclear structure, cell cycle, mRNA export and rRNA maturation. E3 ubiquitin ligase proteins mediate ubiquitination and subsequent proteasomal degradation of target proteins. Involved in transcription regulation by interacting, and probably mediating, ubiquitination of some subunit of the SAGA complex. Required for SPT7 ubiquitination. Participates in mRNA export from the nucleus by regulating the transport of hnRNP proteins. Required for the shuttling of hnRNP protein NAB2, probably by mediating ubiquitination of a protein associated with NAB2. Also required for full induction of the general stress and heat-shock responses. Involved in 18S rRNA maturation by affecting several early steps in the rRNA processing pathway. The sequence is that of E3 ubiquitin-protein ligase TOM1 (TOM1) from Saccharomyces cerevisiae (strain ATCC 204508 / S288c) (Baker's yeast).